A 448-amino-acid polypeptide reads, in one-letter code: D-inositol 3-phosphate glycosyltransferase (448 aa).

The segment at 1-21 (MAEQHTGVGRQRGARPWPRPR) is disordered. His29 is a binding site for 1D-myo-inositol 3-phosphate. UDP-N-acetyl-alpha-D-glucosamine contacts are provided by residues 35-36 (QP) and Gly43. Residues 40–45 (DAGGMN), Lys98, Tyr131, Thr155, and Arg175 contribute to the 1D-myo-inositol 3-phosphate site. UDP-N-acetyl-alpha-D-glucosamine is bound by residues Arg255, Lys260, and Gln321. Tyr330, Arg331, and Ala333 together coordinate Mg(2+). 2 residues coordinate UDP-N-acetyl-alpha-D-glucosamine: Glu343 and Glu351. Thr357 is a binding site for Mg(2+).

Belongs to the glycosyltransferase group 1 family. MshA subfamily. Homodimer.

The enzyme catalyses 1D-myo-inositol 3-phosphate + UDP-N-acetyl-alpha-D-glucosamine = 1D-myo-inositol 2-acetamido-2-deoxy-alpha-D-glucopyranoside 3-phosphate + UDP + H(+). Catalyzes the transfer of a N-acetyl-glucosamine moiety to 1D-myo-inositol 3-phosphate to produce 1D-myo-inositol 2-acetamido-2-deoxy-glucopyranoside 3-phosphate in the mycothiol biosynthesis pathway. The sequence is that of D-inositol 3-phosphate glycosyltransferase from Salinispora arenicola (strain CNS-205).